The primary structure comprises 323 residues: Acetyl-coenzyme A carboxylase carboxyl transferase subunit alpha (323 aa).

The CoA carboxyltransferase C-terminal domain maps to 35-296 (EVLSELDELR…GMTLKKCLDE (262 aa)).

This sequence belongs to the AccA family. In terms of assembly, acetyl-CoA carboxylase is a heterohexamer composed of biotin carboxyl carrier protein (AccB), biotin carboxylase (AccC) and two subunits each of ACCase subunit alpha (AccA) and ACCase subunit beta (AccD).

The protein localises to the cytoplasm. It carries out the reaction N(6)-carboxybiotinyl-L-lysyl-[protein] + acetyl-CoA = N(6)-biotinyl-L-lysyl-[protein] + malonyl-CoA. The protein operates within lipid metabolism; malonyl-CoA biosynthesis; malonyl-CoA from acetyl-CoA: step 1/1. In terms of biological role, component of the acetyl coenzyme A carboxylase (ACC) complex. First, biotin carboxylase catalyzes the carboxylation of biotin on its carrier protein (BCCP) and then the CO(2) group is transferred by the carboxyltransferase to acetyl-CoA to form malonyl-CoA. This Aquifex aeolicus (strain VF5) protein is Acetyl-coenzyme A carboxylase carboxyl transferase subunit alpha.